The primary structure comprises 305 residues: Phosphatidylinositol:ceramide inositolphosphotransferase 2 (305 aa).

6 consecutive transmembrane segments (helical) span residues Leu34–Ile54, Glu81–Leu101, Lys105–Leu125, Val168–Val188, Arg198–Ser218, and His221–Asp241. His180 is an active-site residue. Active-site residues include His221 and Asp225.

This sequence belongs to the sphingomyelin synthase family. Expressed in leaves, roots, stems, flowers and siliques.

It is found in the golgi apparatus. Its subcellular location is the trans-Golgi network membrane. The enzyme catalyses an N-(2R-hydroxy-very-long-chain fatty acyl)-(R)-4-hydroxysphingoid base + a 1,2-diacyl-sn-glycero-3-phospho-(1D-myo-inositol) = a 1D-myo-inositol-1-phospho-N-[(R)-2-hydroxy-very-long-chain fatty acyl]-(R)-4-hydroxysphingoid base + a 1,2-diacyl-sn-glycerol. It participates in sphingolipid metabolism. Its function is as follows. Catalyzes the transfer of the phosphorylinositol group from phosphatidylinositol (PI) to phytoceramide, an essential step in sphingolipid biosynthesis. May play an important role in modulating plant programmed cell death (PCD) associated with defense (e.g. toward Golovinomyces cichoracearum) by promoting sphingolipid metabolism and thus regulating ceramide accumulation. This chain is Phosphatidylinositol:ceramide inositolphosphotransferase 2, found in Arabidopsis thaliana (Mouse-ear cress).